Here is a 244-residue protein sequence, read N- to C-terminus: Reticulon-like protein B7 (244 aa).

One can recognise a Reticulon domain in the interval 70–244; that stretch reads PADVLLWRDK…EAKFLSKIPH (175 aa). The next 3 membrane-spanning stretches (helical) occupy residues 80–100, 103–123, and 172–192; these read KVTL…GFGG, LLTS…LWSN, and FVMA…FSFL.

Its subcellular location is the endoplasmic reticulum membrane. In Arabidopsis thaliana (Mouse-ear cress), this protein is Reticulon-like protein B7 (RTNLB7).